A 469-amino-acid polypeptide reads, in one-letter code: Glutamate--tRNA ligase 2 (469 aa).

The short motif at P10–S20 is the 'HIGH' region element. The short motif at K239–R243 is the 'KMSKS' region element. K242 contacts ATP.

The protein belongs to the class-I aminoacyl-tRNA synthetase family. Glutamate--tRNA ligase type 1 subfamily. In terms of assembly, monomer.

Its subcellular location is the cytoplasm. It carries out the reaction tRNA(Glu) + L-glutamate + ATP = L-glutamyl-tRNA(Glu) + AMP + diphosphate. In terms of biological role, catalyzes the attachment of glutamate to tRNA(Glu) in a two-step reaction: glutamate is first activated by ATP to form Glu-AMP and then transferred to the acceptor end of tRNA(Glu). The protein is Glutamate--tRNA ligase 2 of Rickettsia typhi (strain ATCC VR-144 / Wilmington).